A 216-amino-acid polypeptide reads, in one-letter code: Soluble inorganic pyrophosphatase 4 (216 aa).

Ser-18 carries the phosphoserine modification. Positions 66 and 80 each coordinate substrate. Catalysis depends on Tyr-88, which acts as the Proton donor. Residue Tyr-92 coordinates substrate. Positions 102, 107, and 139 each coordinate Mg(2+). Residue Tyr-176 participates in substrate binding.

This sequence belongs to the PPase family. Monomer. It depends on Mg(2+) as a cofactor. As to expression, ubiquitous, excepted in pollen. Very low expression in cork, xylem and hypocotyls.

It localises to the cytoplasm. The enzyme catalyses diphosphate + H2O = 2 phosphate + H(+). Its activity is regulated as follows. Inhibited by Zn(2+), Ca(2+), Ba(2+), Fe(2+), Co(2+), Cu(2+), Eu(2+), Eu(3+) and Mn(2+). Functionally, catalyzes the irreversible hydrolysis of pyrophosphate (PPi) to phosphate. The MgPPi(2-) complex binds to the enzyme only after a free Mg(2+) ion has bound. No activity with glycerol-3-phosphate, glucose-6-phosphate, p-nitrophenylphosphate, ADP, NADP(+), NAD(+),NADH, NADPH or phosphoribosyl pyrophosphate as substrates. This Arabidopsis thaliana (Mouse-ear cress) protein is Soluble inorganic pyrophosphatase 4.